The primary structure comprises 373 residues: Glutamine synthetase (373 aa).

Residue Ala2 is modified to N-acetylalanine. A required for glutamine-induced ubiquitination by CRL4(CRBN) and proteasomal degradation region spans residues 2–25 (ATSASSHLNKGIKQMYMNLPQGEK). 2 positions are modified to N6-acetyllysine: Lys11 and Lys14. Residues 24–106 (EKIQLMYIWV…VFCEVFKYNR (83 aa)) enclose the GS beta-grasp domain. A Phosphotyrosine modification is found at Tyr104. Residues 113–373 (LRHSCKRIMD…TGDEPFQYKN (261 aa)) form the GS catalytic domain. ATP is bound at residue Glu134. Mn(2+) is bound by residues Glu134, Glu136, Glu196, and Glu203. Residue 203-208 (EFQIGP) participates in ATP binding. An L-glutamate-binding site is contributed by 246-247 (NW). His253 provides a ligand contact to Mn(2+). Residues 255–257 (NFS), Arg319, and Arg324 each bind ATP. Arg319 is an L-glutamate binding site. An ADP-binding site is contributed by 336 to 338 (YFE). Glu338 is a Mn(2+) binding site. Arg340 provides a ligand contact to L-glutamate. A Phosphoserine modification is found at Ser343.

It belongs to the glutamine synthetase family. As to quaternary structure, decamer; composed of two pentamers. Interacts with PALMD. Interacts with RHOJ. Interacts with BEST2; this interaction tethers a fraction of GLUL to the membrane, causing a decrease of cytosolic glutamine synthase (GS) activity and inhibits the chloride channel activity of BEST2 by affecting the gating at the aperture in the absence of intracellular glutamate. Mg(2+) is required as a cofactor. Requires Mn(2+) as cofactor. In terms of processing, palmitoylated; undergoes autopalmitoylation. Acetylated by EP300/p300; acetylation is stimulated by increased glutamine levels and promotes ubiquitin-mediated proteasomal degradation. Post-translationally, ubiquitinated by ZNRF1. Ubiquitinated by the DCX (DDB1-CUL4-X-box) E3 ubiquitin-protein ligase complex called CRL4(CRBN), leading to proteasomal degradation. In the adult liver, expression is restricted to a small population of hepatocytes which form only a small rim of one to three hepatocytes around the central veins. Expressed in lung microvascular endothelial cells.

The protein resides in the cytoplasm. Its subcellular location is the cytosol. The protein localises to the microsome. It is found in the mitochondrion. It localises to the cell membrane. It catalyses the reaction L-glutamate + NH4(+) + ATP = L-glutamine + ADP + phosphate + H(+). It carries out the reaction L-cysteinyl-[protein] + hexadecanoyl-CoA = S-hexadecanoyl-L-cysteinyl-[protein] + CoA. Its activity is regulated as follows. Glutamine synthetase activity is inhibited by methionine sulfoximine (MSO). Functionally, glutamine synthetase that catalyzes the ATP-dependent conversion of glutamate and ammonia to glutamine. Its role depends on tissue localization: in the brain, it regulates the levels of toxic ammonia and converts neurotoxic glutamate to harmless glutamine, whereas in the liver, it is one of the enzymes responsible for the removal of ammonia. Plays a key role in ammonium detoxification during erythropoiesis: the glutamine synthetase activity is required to remove ammonium generated by porphobilinogen deaminase (HMBS) during heme biosynthesis to prevent ammonium accumulation and oxidative stress. Essential for proliferation of fetal skin fibroblasts. Independently of its glutamine synthetase activity, required for endothelial cell migration during vascular development. Involved in angiogenesis by regulating membrane localization and activation of the GTPase RHOJ, possibly by promoting RHOJ palmitoylation. May act as a palmitoyltransferase for RHOJ: able to autopalmitoylate and then transfer the palmitoyl group to RHOJ. Plays a role in ribosomal 40S subunit biogenesis. Through the interaction with BEST2, inhibits BEST2 channel activity by affecting the gating at the aperture in the absence of intracellular L-glutamate, but sensitizes BEST2 to intracellular L-glutamate, which promotes the opening of BEST2 and thus relieves its inhibitory effect on BEST2. The chain is Glutamine synthetase from Rattus norvegicus (Rat).